We begin with the raw amino-acid sequence, 401 residues long: Elongation factor Tu (401 aa).

One can recognise a tr-type G domain in the interval 10–211 (KPHLNVGTIG…ALDTFVPNPK (202 aa)). Residues 19–26 (GHVDHGKT) are G1. 19–26 (GHVDHGKT) is a GTP binding site. Residue Thr-26 participates in Mg(2+) binding. Positions 62-66 (GITIA) are G2. Residues 83-86 (DCPG) form a G3 region. GTP contacts are provided by residues 83-87 (DCPGH) and 138-141 (NKAD). Positions 138-141 (NKAD) are G4. Positions 179–181 (SAV) are G5.

This sequence belongs to the TRAFAC class translation factor GTPase superfamily. Classic translation factor GTPase family. EF-Tu/EF-1A subfamily. Monomer.

It is found in the cytoplasm. The catalysed reaction is GTP + H2O = GDP + phosphate + H(+). GTP hydrolase that promotes the GTP-dependent binding of aminoacyl-tRNA to the A-site of ribosomes during protein biosynthesis. The sequence is that of Elongation factor Tu from Leptospira borgpetersenii serovar Hardjo-bovis (strain JB197).